The following is a 373-amino-acid chain: MVSNMRSTRTALTGWVGIFLVLSLQQTSCAGLPHNVDTHHILTFNPSPISADGVPLSEVPNSPTTELSTTVATKTAVPTTESTSSSEAHRNSSHKIPDIICDREEVFVFLNNTGRILCDLIVDPPSDDEWSNFALDVTFNPIEYHANEKNVEVARVAGLYGVPGSDYAYPRKSELISSIRRDPQGSFWTSPTPRGNKYFIWINKTMHTMGVEVRNVDYKDNGYFQVILRDRFNRPLVEKHIYMRVCQRPASVDVLAPPVLSGENYKASCIVRHFYPPGSVYVSWRRNGNIATPRKDRDGSFWWFESGRGATLVSTITLGNSGLESPPKVSCLVAWRQGDMISTSNATAVPTVYYHPRISLAFKDGSLQDHRSL.

Positions 1–25 (MVSNMRSTRTALTGWVGIFLVLSLQ) are cleaved as a signal peptide. A disordered region spans residues 58 to 93 (EVPNSPTTELSTTVATKTAVPTTESTSSSEAHRNSS). Residues 59-68 (VPNSPTTELS) are compositionally biased toward polar residues. The span at 69-80 (TTVATKTAVPTT) shows a compositional bias: low complexity. 4 N-linked (GlcNAc...) asparagine; by host glycosylation sites follow: Asn-91, Asn-111, Asn-203, and Asn-345. The 99-residue stretch at 249–347 (PASVDVLAPP…GDMISTSNAT (99 aa)) folds into the Ig-like domain.

This sequence belongs to the herpesviridae glycoprotein C family.

This is Envelope glycoprotein C homolog (gC) from Gallus gallus (Chicken).